The chain runs to 73 residues: U3-agatoxin-Ao1e (73 aa).

An N-terminal signal peptide occupies residues 1-20 (MRTIISLLLLSAMVFAVIEA). The propeptide occupies 21–34 (ISLEEGLQLFEGER). Intrachain disulfides connect Cys36–Cys52, Cys43–Cys57, Cys51–Cys67, and Cys59–Cys65. Asn71 is subject to Asparagine amide.

This sequence belongs to the neurotoxin 07 (Beta/delta-agtx) family. 03 (aga-4) subfamily. Aga sub-subfamily. Expressed by the venom gland.

The protein resides in the secreted. Its function is as follows. Insecticidal neurotoxin that induces an irreversible spastic paralysis when injected into insects. Modifies presynaptic voltage-gated sodium channels (Nav), causing them to open at the normal resting potential of the nerve. This leads to spontaneous release of neurotransmitter and repetitive action potentials in motor neurons. This is U3-agatoxin-Ao1e from Agelena orientalis (Funnel-web spider).